The primary structure comprises 197 residues: 3-isopropylmalate dehydratase small subunit (197 aa).

The protein belongs to the LeuD family. LeuD type 1 subfamily. As to quaternary structure, heterodimer of LeuC and LeuD.

It catalyses the reaction (2R,3S)-3-isopropylmalate = (2S)-2-isopropylmalate. It functions in the pathway amino-acid biosynthesis; L-leucine biosynthesis; L-leucine from 3-methyl-2-oxobutanoate: step 2/4. In terms of biological role, catalyzes the isomerization between 2-isopropylmalate and 3-isopropylmalate, via the formation of 2-isopropylmaleate. The chain is 3-isopropylmalate dehydratase small subunit from Acidothermus cellulolyticus (strain ATCC 43068 / DSM 8971 / 11B).